We begin with the raw amino-acid sequence, 301 residues long: Ornithine carbamoyltransferase (301 aa).

Carbamoyl phosphate-binding positions include Arg-100 and 127-130 (HPCQ). L-ornithine-binding positions include Asn-158, Asp-221, and 225–226 (SM). Carbamoyl phosphate is bound by residues 260–261 (CL) and Arg-288.

This sequence belongs to the aspartate/ornithine carbamoyltransferase superfamily. OTCase family.

The protein localises to the cytoplasm. The catalysed reaction is carbamoyl phosphate + L-ornithine = L-citrulline + phosphate + H(+). It participates in amino-acid biosynthesis; L-arginine biosynthesis; L-arginine from L-ornithine and carbamoyl phosphate: step 1/3. In terms of biological role, reversibly catalyzes the transfer of the carbamoyl group from carbamoyl phosphate (CP) to the N(epsilon) atom of ornithine (ORN) to produce L-citrulline. This Shewanella oneidensis (strain ATCC 700550 / JCM 31522 / CIP 106686 / LMG 19005 / NCIMB 14063 / MR-1) protein is Ornithine carbamoyltransferase.